The chain runs to 446 residues: MQFTHLVALALALATSEAAHQGFNYGNTKSDGSAKSQADFQAEFSTAKNLVGTSGFTSARLYTMIQGGTANTPISAIPAAITEQTSLLLGLWASGGNFANEIAALKAAIAQYGDDLAKLVVGISVGSEDLYRNSVDGVKANAGIGTNPDEIVSYINEVRSTIAGTKLSGAPIGHVDTWTAWVNGSNSAVIDACDWLGFDGYPYFQNTMANSISDAKALFDESVAKTQAVAKGKEVWITETGWPVSGKTENLAVANLANAKTYWDEVGCPLFGKTNTWWYILQDADPVTPNPSFGIVGSTLSTTPLFDLSCSASSSSSAAAAASSTAGPSASSVIGGKASGFTTAAANSAKPTFTVGKGPGGSYNGTGFWNSTSSARPSSSAISGSSSGSAAGSSGAGASGASGQSSSSTGSSSAPSTSNILSNAASGLSGSIFGAVVAVCLALAAL.

A signal peptide spans 1 to 18; it reads MQFTHLVALALALATSEA. The Proton donor role is filled by Glu-128. N-linked (GlcNAc...) asparagine glycosylation occurs at Asn-183. Catalysis depends on Glu-239, which acts as the Nucleophile. Asn-364 and Asn-370 each carry an N-linked (GlcNAc...) asparagine glycan. The tract at residues 393–416 is disordered; that stretch reads SSGAGASGASGQSSSSTGSSSAPS. The span at 401 to 416 shows a compositional bias: low complexity; sequence ASGQSSSSTGSSSAPS. Asn-423 carries GPI-anchor amidated asparagine lipidation. A propeptide spans 424-446 (removed in mature form); it reads AASGLSGSIFGAVVAVCLALAAL.

The protein belongs to the glycosyl hydrolase 17 family. In terms of processing, the GPI-anchor is attached to the protein in the endoplasmic reticulum and serves to target the protein to the cell surface. There, the glucosamine-inositol phospholipid moiety is cleaved off and the GPI-modified mannoprotein is covalently attached via its lipidless GPI glycan remnant to the 1,6-beta-glucan of the outer cell wall layer.

The protein resides in the cell membrane. It localises to the secreted. It is found in the cell wall. The enzyme catalyses Hydrolysis of (1-&gt;3)-beta-D-glucosidic linkages in (1-&gt;3)-beta-D-glucans.. Functionally, glucanases play a role in cell expansion during growth, in cell-cell fusion during mating, and in spore release during sporulation. This enzyme may be involved in beta-glucan degradation and also function biosynthetically as a transglycosylase. In Aspergillus fumigatus (strain ATCC MYA-4609 / CBS 101355 / FGSC A1100 / Af293) (Neosartorya fumigata), this protein is Probable glucan endo-1,3-beta-glucosidase eglC (eglC).